We begin with the raw amino-acid sequence, 217 residues long: Nucleoside diphosphate kinase homolog 5 (217 aa).

An NDK region spans residues 18 to 151 (ERTLALIKPD…REIRFMFPHS (134 aa)).

The protein belongs to the NDK family.

It localises to the cell projection. It is found in the cilium. Functions as part of axonemal radial spoke complexes that play an important part in the motility of sperm and cilia. Does not seem to have nucleoside diphosphate kinase (NDPK) activity. Exhibits a 3'-5' exonuclease activity with a preference for single-stranded DNA, suggesting roles in DNA proofreading and repair. The polypeptide is Nucleoside diphosphate kinase homolog 5 (nme5) (Danio rerio (Zebrafish)).